A 347-amino-acid polypeptide reads, in one-letter code: NADH-ubiquinone oxidoreductase chain 2 (347 aa).

11 helical membrane passes run 3–23 (PPIL…VLTS), 25–45 (HWLL…PILM), 60–80 (FLTQ…NLMF), 96–116 (GLVT…FWVP), 122–142 (ISLS…LSVL), 153–173 (LLIT…LNQT), 178–198 (ILAY…TYNP), 200–220 (LMVL…MLFM), 237–257 (LPLM…LPPL), 274–294 (DMII…YFYM), and 323–343 (IILL…TPMM).

This sequence belongs to the complex I subunit 2 family. In terms of assembly, core subunit of respiratory chain NADH dehydrogenase (Complex I) which is composed of 45 different subunits. Interacts with TMEM242.

The protein localises to the mitochondrion inner membrane. The enzyme catalyses a ubiquinone + NADH + 5 H(+)(in) = a ubiquinol + NAD(+) + 4 H(+)(out). Its function is as follows. Core subunit of the mitochondrial membrane respiratory chain NADH dehydrogenase (Complex I) which catalyzes electron transfer from NADH through the respiratory chain, using ubiquinone as an electron acceptor. Essential for the catalytic activity and assembly of complex I. This chain is NADH-ubiquinone oxidoreductase chain 2, found in Phoca vitulina (Harbor seal).